Here is a 264-residue protein sequence, read N- to C-terminus: Glutamate racemase (264 aa).

Substrate contacts are provided by residues 10–11 (DS) and 42–43 (YG). The Proton donor/acceptor role is filled by Cys73. Residue 74-75 (NT) coordinates substrate. Cys183 acts as the Proton donor/acceptor in catalysis. 184–185 (TH) contacts substrate.

This sequence belongs to the aspartate/glutamate racemases family.

It carries out the reaction L-glutamate = D-glutamate. The protein operates within cell wall biogenesis; peptidoglycan biosynthesis. Functionally, provides the (R)-glutamate required for cell wall biosynthesis. The chain is Glutamate racemase from Streptococcus pyogenes serotype M4 (strain MGAS10750).